The chain runs to 310 residues: Altered inheritance of mitochondria protein 46, mitochondrial (310 aa).

Residues 1–20 constitute a mitochondrion transit peptide; the sequence is MRLISKVLVKTNCLEVGMRR.

Belongs to the AIM18/AIM46 family.

The protein localises to the mitochondrion. This is Altered inheritance of mitochondria protein 46, mitochondrial (AIM46) from Saccharomyces cerevisiae (strain YJM789) (Baker's yeast).